A 524-amino-acid polypeptide reads, in one-letter code: Mediator of RNA polymerase II transcription subunit 8 (524 aa).

Met-1 carries the post-translational modification N-acetylmethionine. The stretch at 137–162 (MQIERLKARMDMIAAACENAERVLAD) forms a coiled coil. 2 disordered regions span residues 291–315 (VPSP…LMQL) and 474–524 (MMQT…QNPQ). Composition is skewed to low complexity over residues 295–315 (QHQI…LMQL) and 474–505 (MMQT…TNQQ). Residues 506 to 524 (SLQPNNMMQNAQQRHQNPQ) show a composition bias toward polar residues.

It belongs to the Mediator complex subunit 8 family. As to quaternary structure, component of the Mediator complex.

It is found in the nucleus. Its function is as follows. Component of the Mediator complex, a coactivator involved in the regulated transcription of nearly all RNA polymerase II-dependent genes. Mediator functions as a bridge to convey information from gene-specific regulatory proteins to the basal RNA polymerase II transcription machinery. The Mediator complex, having a compact conformation in its free form, is recruited to promoters by direct interactions with regulatory proteins and serves for the assembly of a functional preinitiation complex with RNA polymerase II and the general transcription factors. Regulator of both plant defense and flowering time. Involved in pollen tube growth. The chain is Mediator of RNA polymerase II transcription subunit 8 (MED8) from Arabidopsis thaliana (Mouse-ear cress).